A 182-amino-acid polypeptide reads, in one-letter code: Large ribosomal subunit protein uL10 (182 aa).

This sequence belongs to the universal ribosomal protein uL10 family. As to quaternary structure, part of the ribosomal stalk of the 50S ribosomal subunit. The N-terminus interacts with L11 and the large rRNA to form the base of the stalk. The C-terminus forms an elongated spine to which L12 dimers bind in a sequential fashion forming a multimeric L10(L12)X complex.

In terms of biological role, forms part of the ribosomal stalk, playing a central role in the interaction of the ribosome with GTP-bound translation factors. The protein is Large ribosomal subunit protein uL10 of Chloroflexus aurantiacus (strain ATCC 29364 / DSM 637 / Y-400-fl).